We begin with the raw amino-acid sequence, 161 residues long: Non-secretory ribonuclease (161 aa).

A signal peptide spans 1-27 (MVPKLFTSQICLLLLLGLMGVEGSLHA). C-linked (Man) tryptophan glycosylation occurs at W34. Residue H42 is the Proton acceptor of the active site. N44 is a glycosylation site (N-linked (GlcNAc...) asparagine). Cystine bridges form between C50–C110, C64–C123, C82–C138, and C89–C98. 3'-nitrotyrosine is present on Y60. 65–69 (KNQNT) is a substrate binding site. N-linked (GlcNAc...) asparagine glycosylation is found at N86, N92, N111, and N119. H156 functions as the Proton donor in the catalytic mechanism.

Belongs to the pancreatic ribonuclease family. As to quaternary structure, interacts with and forms a tight 1:1 complex with RNH1. Dimerization of two such complexes may occur.

The protein localises to the lysosome. Its subcellular location is the cytoplasmic granule. It catalyses the reaction an [RNA] containing cytidine + H2O = an [RNA]-3'-cytidine-3'-phosphate + a 5'-hydroxy-ribonucleotide-3'-[RNA].. The catalysed reaction is an [RNA] containing uridine + H2O = an [RNA]-3'-uridine-3'-phosphate + a 5'-hydroxy-ribonucleotide-3'-[RNA].. Functionally, this is a non-secretory ribonuclease. It is a pyrimidine specific nuclease with a slight preference for U. Cytotoxin and helminthotoxin. Possesses a wide variety of biological activities. The chain is Non-secretory ribonuclease (RNASE2) from Nomascus leucogenys (Northern white-cheeked gibbon).